We begin with the raw amino-acid sequence, 793 residues long: Xaa-Pro dipeptidyl-peptidase (793 aa).

Active-site charge relay system residues include serine 363, aspartate 483, and histidine 514.

This sequence belongs to the peptidase S15 family. In terms of assembly, homodimer.

The protein resides in the cytoplasm. It carries out the reaction Hydrolyzes Xaa-Pro-|- bonds to release unblocked, N-terminal dipeptides from substrates including Ala-Pro-|-p-nitroanilide and (sequentially) Tyr-Pro-|-Phe-Pro-|-Gly-Pro-|-Ile.. Removes N-terminal dipeptides sequentially from polypeptides having unsubstituted N-termini provided that the penultimate residue is proline. The sequence is that of Xaa-Pro dipeptidyl-peptidase from Lactobacillus helveticus (strain DPC 4571).